The sequence spans 838 residues: Leucine--tRNA ligase (838 aa).

The 'HIGH' region motif lies at P36–H46. The 'KMSKS' region motif lies at K611–S615. K614 is a binding site for ATP.

It belongs to the class-I aminoacyl-tRNA synthetase family.

It localises to the cytoplasm. The enzyme catalyses tRNA(Leu) + L-leucine + ATP = L-leucyl-tRNA(Leu) + AMP + diphosphate. This chain is Leucine--tRNA ligase, found in Wolbachia sp. subsp. Drosophila simulans (strain wRi).